The primary structure comprises 870 residues: Breast cancer anti-estrogen resistance protein 1 (870 aa).

The residue at position 1 (Met1) is an N-acetylmethionine. Positions 3–65 constitute an SH3 domain; sequence HLNVLAKALY…PGNRLKILVG (63 aa). The segment at 70–156 is disordered; it reads KPAGPGPGPP…TFSKQTPHHP (87 aa). The segment covering 73 to 85 has biased composition (pro residues); sequence GPGPGPPATPAQP. Over residues 97 to 111 the composition is skewed to polar residues; it reads SQYTPMLPNTYQPQP. The substrate for kinases stretch occupies residues 115–416; it reads YLVPTPSKAQ…SGVYAVPPPA (302 aa). Phosphotyrosine; by SRC is present on Tyr128. Phosphoserine occurs at positions 134 and 139. The span at 135–151 shows a compositional bias: polar residues; sequence PQFQSPPAKQTSTFSKQ. Tyr234 carries the phosphotyrosine modification. Residue Tyr249 is modified to Phosphotyrosine; by ABL1. A Phosphothreonine modification is found at Thr269. At Ser292 the chain carries Phosphoserine. Tyr362, Tyr372, and Tyr410 each carry phosphotyrosine. 3 disordered regions span residues 411–449, 609–658, and 715–734; these read AVPP…VAGP, KATA…NSEG, and IDHD…GRTG. The segment covering 416 to 426 has biased composition (basic and acidic residues); it reads AEREAPAEGKR. Positions 427–444 are enriched in low complexity; the sequence is LSASSTGSTRSSQSASSL. A phosphoserine mark is found at Ser428, Ser437, and Ser639. A compositionally biased stretch (polar residues) spans 626–655; sequence TDKTSSIQSRPLPSPPKFTSQDSPDGQYEN. The SH3-binding motif lies at 635–643; the sequence is RPLPSPPKF. Positions 746-796 are divergent helix-loop-helix motif; the sequence is FYLEQCEANLTTLTNAVDAFFTAVATNQPPKIFVAHSKFVILSAHKLVFIG.

This sequence belongs to the CAS family. In terms of assembly, forms complexes in vivo with PTK2/FAK1, adapter protein CRKL and LYN kinase. Heterodimerizes with NEDD9. Component of a complex comprised of SH2D3C, BCAR1/CAS, and CRK. Within the complex, interacts with SH2D3C (via C-terminus), and CRK. Part of a complex comprised of PTPRA, BCAR1, BCAR3 (via SH2 domain) and SRC; the formation of the complex is dependent on integrin mediated-tyrosine phosphorylation of PTPRA. Interacts with BCAR3 (via Ras-GEF domain); the interaction regulates adhesion-dependent serine phosphorylation. Interacts with SMAD2 and SMAD3. Interacts with NPHP1. Interacts with PTK2B/PYK2. Interacts (via C-terminus) with SH2D3C/CHAT isoform 2 (via C-terminus). Interacts with activated CSPG4. Interacts with BMX, INPPL1/SHIP2 and PEAK1. Part of a collagen-stimulated complex involved in cell migration made of CDC42, CRK, TNK2 and BCAR1/p130cas. Interacts with TNK2 via SH3 domains. Interacts (when tyrosine-phosphorylated) with tensin TNS1; the interaction is increased by phosphorylation of TNS1. In terms of processing, PTK2/FAK1 activation mediates phosphorylation at the YDYVHL motif; phosphorylation is most likely catalyzed by SRC family members. SRC-family kinases are recruited to the phosphorylated sites and can phosphorylate other tyrosine residues. Tyrosine phosphorylation is triggered by integrin-mediated adhesion of cells to the extracellular matrix. Post-translationally, dephosphorylated by PTPN14 at Tyr-128. Phosphorylated by SRC kinase in a EDN1- and PTK2B-mediated manner; phosphorylation strengthens its interaction with BCAR3 as part of the PTK2B/BCAR1/BCAR3/RAP1 signaling pathway. In terms of tissue distribution, expressed in B-cells (at protein level). Widely expressed with an abundant expression in the testis. Low level of expression seen in the liver, thymus, and peripheral blood leukocytes.

The protein resides in the cell junction. Its subcellular location is the focal adhesion. The protein localises to the cytoplasm. It is found in the cell projection. It localises to the axon. Its function is as follows. Docking protein which plays a central coordinating role for tyrosine kinase-based signaling related to cell adhesion. Implicated in induction of cell migration and cell branching. Involved in the BCAR3-mediated inhibition of TGFB signaling. This Homo sapiens (Human) protein is Breast cancer anti-estrogen resistance protein 1 (BCAR1).